The chain runs to 596 residues: ATP-dependent lipid A-core flippase (596 aa).

A run of 6 helical transmembrane segments spans residues 34-54 (VWVLVAGVLAMAAVAATEAGI), 80-100 (AAVVGLALARAIAQYASGYLL), 138-158 (AVVFEVNQVLSVLMGVMITLV), 164-184 (VVFLLGYLFYLNWRLTLIVAI), 263-283 (QPLTQFLASIALAVVLTIAVV), and 292-312 (VGGFVAFVTAMLLIISPLKHL). The 284-residue stretch at 38–321 (VAGVLAMAAV…LMDVNQPLQR (284 aa)) folds into the ABC transmembrane type-1 domain. An ABC transporter domain is found at 353-589 (IEFSHVSFSY…GGLYAHLHRI (237 aa)). ATP is bound at residue 389 to 396 (GPSGSGKT).

The protein belongs to the ABC transporter superfamily. Lipid exporter (TC 3.A.1.106) family. As to quaternary structure, homodimer.

The protein resides in the cell inner membrane. It carries out the reaction ATP + H2O + lipid A-core oligosaccharideSide 1 = ADP + phosphate + lipid A-core oligosaccharideSide 2.. Involved in lipopolysaccharide (LPS) biosynthesis. Translocates lipid A-core from the inner to the outer leaflet of the inner membrane. Transmembrane domains (TMD) form a pore in the inner membrane and the ATP-binding domain (NBD) is responsible for energy generation. The chain is ATP-dependent lipid A-core flippase from Burkholderia thailandensis (strain ATCC 700388 / DSM 13276 / CCUG 48851 / CIP 106301 / E264).